Here is an 856-residue protein sequence, read N- to C-terminus: Structure-specific endonuclease subunit SLX4 (856 aa).

Polar residues predominate over residues 1–19 (MDNAAIASQSNTPPSNGRS). Disordered stretches follow at residues 1–24 (MDNA…ARFV), 38–65 (VIEP…SHKI), 88–121 (VDSP…HKMA), 139–202 (KTRK…DNEL), 296–326 (GIQT…KKPQ), 362–392 (KKMG…GNGP), 621–640 (SKSS…SQGD), 668–689 (RLAK…NEGP), and 715–742 (DSVG…QDCD). Over residues 51 to 60 (STLLTSLSKS) the composition is skewed to low complexity. A compositionally biased stretch (basic residues) spans 139–152 (KTRKKKAATAKRTR). The span at 296-309 (GIQTPTESRPATND) shows a compositional bias: polar residues. Positions 673–686 (SVKSQEPKSFSLSN) are enriched in polar residues.

The protein belongs to the SLX4 family. As to quaternary structure, forms a heterodimer with SLX1. In terms of processing, phosphorylated in response to DNA damage.

The protein localises to the nucleus. Functionally, regulatory subunit of the SLX1-SLX4 structure-specific endonuclease that resolves DNA secondary structures generated during DNA repair and recombination. Has endonuclease activity towards branched DNA substrates, introducing single-strand cuts in duplex DNA close to junctions with ss-DNA. The protein is Structure-specific endonuclease subunit SLX4 of Blastomyces gilchristii (strain SLH14081) (Blastomyces dermatitidis).